Consider the following 420-residue polypeptide: Glycogen synthase kinase-3 beta (420 aa).

Over residues 1 to 24 (MSGRPRTTSFAESCKPVQQPSSFG) the composition is skewed to polar residues. Residues 1 to 50 (MSGRPRTTSFAESCKPVQQPSSFGSMKVSRDKDGSKVTTVVATPGQGPDR) are disordered. One can recognise a Protein kinase domain in the interval 56 to 340 (YTDTKVIGNG…PLDACAHSFF (285 aa)). Residues 62–70 (IGNGSFGVV) and lysine 85 each bind ATP. Aspartate 181 functions as the Proton acceptor in the catalytic mechanism. The interval 384–420 (NQAAVSTTSNTTSTSDSNTGERGSTNNAASASASNSS) is disordered. 2 stretches are compositionally biased toward low complexity: residues 389–401 (STTSNTTSTSDSN) and 409–420 (NNAASASASNSS).

It belongs to the protein kinase superfamily. CMGC Ser/Thr protein kinase family. GSK-3 subfamily. Post-translationally, phosphorylated. Activated by phosphorylation at Tyr-216.

It localises to the cytoplasm. The protein resides in the nucleus. The protein localises to the cell membrane. It carries out the reaction L-seryl-[tau protein] + ATP = O-phospho-L-seryl-[tau protein] + ADP + H(+). The catalysed reaction is L-threonyl-[tau protein] + ATP = O-phospho-L-threonyl-[tau protein] + ADP + H(+). In terms of biological role, plays a role in the organization of the formation of the main body axis of developing embryo. Acts as an inhibitor of differentiation of primary neurons. Inhibits the ability of ectopically expressed NEUROD1 and other bHLH factors to promote early retinal cell differentiation. May participate in the Wnt signaling pathway. May regulate the circadian clock via phosphorylation of the major clock components. The chain is Glycogen synthase kinase-3 beta (gsk3b) from Xenopus laevis (African clawed frog).